Reading from the N-terminus, the 44-residue chain is Cytochrome b559 subunit beta (44 aa).

A helical membrane pass occupies residues 19 to 35 (WLAVHTLAVPTVFFIGA). Position 23 (histidine 23) interacts with heme.

This sequence belongs to the PsbE/PsbF family. As to quaternary structure, heterodimer of an alpha subunit and a beta subunit. PSII is composed of 1 copy each of membrane proteins PsbA, PsbB, PsbC, PsbD, PsbE, PsbF, PsbH, PsbI, PsbJ, PsbK, PsbL, PsbM, PsbT, PsbX, PsbY, PsbZ, Psb30/Ycf12, peripheral proteins PsbO, CyanoQ (PsbQ), PsbU, PsbV and a large number of cofactors. It forms dimeric complexes. Requires heme b as cofactor.

The protein resides in the cellular thylakoid membrane. In terms of biological role, this b-type cytochrome is tightly associated with the reaction center of photosystem II (PSII). PSII is a light-driven water:plastoquinone oxidoreductase that uses light energy to abstract electrons from H(2)O, generating O(2) and a proton gradient subsequently used for ATP formation. It consists of a core antenna complex that captures photons, and an electron transfer chain that converts photonic excitation into a charge separation. In Gloeothece citriformis (strain PCC 7424) (Cyanothece sp. (strain PCC 7424)), this protein is Cytochrome b559 subunit beta.